The sequence spans 414 residues: Solute carrier family 25 member 46-B (414 aa).

Basic and acidic residues predominate over residues 1-13 (MQPRRPDRFDGLE). Positions 1–89 (MQPRRPDRFD…AFGEENSGSS (89 aa)) are disordered. A compositionally biased stretch (polar residues) spans 29-50 (YQSSFPARSLSSSGDLSQQWVT). The stretch at 92-183 (QVNRFAGFGI…GMLSEFTHLP (92 aa)) is one Solcar 1 repeat. Transmembrane regions (helical) follow at residues 99–119 (FGIG…CIVL), 159–179 (MGST…LSEF), 198–218 (HLLL…ASLI), 254–274 (LLPL…HYII), 310–330 (FPEL…LYPL), and 379–399 (LGFY…AIVL). Residues 307–412 (EDYFPELLAN…KIIYSSVVQT (106 aa)) form a Solcar 2 repeat.

The protein belongs to the mitochondrial carrier (TC 2.A.29) family.

Its subcellular location is the mitochondrion outer membrane. Its function is as follows. May play a role in mitochondrial dynamics by controlling mitochondrial membrane fission. This is Solute carrier family 25 member 46-B (slc25a46-b) from Xenopus laevis (African clawed frog).